The following is a 449-amino-acid chain: Chromosomal replication initiator protein DnaA (449 aa).

A domain I, interacts with DnaA modulators region spans residues 1–83 (MDDSLWSACL…VELEIGSPPT (83 aa)). Residues 77–114 (EIGSPPTPDQREAATGATRAAPAQRSSEPRQRPVDSNL) are disordered. Positions 83–112 (TPDQREAATGATRAAPAQRSSEPRQRPVDS) are domain II. Residues 89-99 (AATGATRAAPA) show a composition bias toward low complexity. Positions 113-329 (NLNPGFTFDS…GALRRITANA (217 aa)) are domain III, AAA+ region. ATP contacts are provided by Gly157, Gly159, Lys160, and Thr161. Positions 330 to 449 (QFTGRAIDVD…YDNLLRTLST (120 aa)) are domain IV, binds dsDNA.

Belongs to the DnaA family. In terms of assembly, oligomerizes as a right-handed, spiral filament on DNA at oriC.

Its subcellular location is the cytoplasm. Its function is as follows. Plays an essential role in the initiation and regulation of chromosomal replication. ATP-DnaA binds to the origin of replication (oriC) to initiate formation of the DNA replication initiation complex once per cell cycle. Binds the DnaA box (a 9 base pair repeat at the origin) and separates the double-stranded (ds)DNA. Forms a right-handed helical filament on oriC DNA; dsDNA binds to the exterior of the filament while single-stranded (ss)DNA is stabiized in the filament's interior. The ATP-DnaA-oriC complex binds and stabilizes one strand of the AT-rich DNA unwinding element (DUE), permitting loading of DNA polymerase. After initiation quickly degrades to an ADP-DnaA complex that is not apt for DNA replication. Binds acidic phospholipids. In Halorhodospira halophila (strain DSM 244 / SL1) (Ectothiorhodospira halophila (strain DSM 244 / SL1)), this protein is Chromosomal replication initiator protein DnaA.